The following is a 130-amino-acid chain: Fluoride-specific ion channel FluC (130 aa).

4 helical membrane-spanning segments follow: residues 1 to 21 (MGEI…RYGL), 36 to 56 (GTLI…QWGF), 65 to 85 (LKLM…TFSY), and 103 to 123 (ILAN…LGSL). Residues G75 and T78 each contribute to the Na(+) site.

It belongs to the fluoride channel Fluc/FEX (TC 1.A.43) family.

The protein resides in the cell membrane. The catalysed reaction is fluoride(in) = fluoride(out). With respect to regulation, na(+) is not transported, but it plays an essential structural role and its presence is essential for fluoride channel function. Fluoride-specific ion channel. Important for reducing fluoride concentration in the cell, thus reducing its toxicity. The polypeptide is Fluoride-specific ion channel FluC (Dehalococcoides mccartyi (strain ATCC BAA-2266 / KCTC 15142 / 195) (Dehalococcoides ethenogenes (strain 195))).